A 308-amino-acid polypeptide reads, in one-letter code: Glucan 1,3-beta-glucosidase BGL2 (308 aa).

An N-terminal signal peptide occupies residues 1 to 18 (MQIKFLTTLATVLTSVAA). Glu119 (proton donor) is an active-site residue. Residue Asn197 is glycosylated (N-linked (GlcNAc...) asparagine). The Nucleophile role is filled by Glu228.

It belongs to the glycosyl hydrolase 17 family.

It is found in the secreted. It localises to the cell wall. Its subcellular location is the cytoplasm. It carries out the reaction Successive hydrolysis of beta-D-glucose units from the non-reducing ends of (1-&gt;3)-beta-D-glucans, releasing alpha-glucose.. In terms of biological role, cell wall glucan 1,3-beta-glucosidase involved in cell wall biosynthesis and virulence. Crucial for delivery of beta-1,3-glucan to the biofilm matrix and for accumulation of mature matrix biomass. Plays a role as a major antigen in human systemic candidiasis patients. This Candida albicans (strain SC5314 / ATCC MYA-2876) (Yeast) protein is Glucan 1,3-beta-glucosidase BGL2 (BGL2).